A 183-amino-acid chain; its full sequence is Large ribosomal subunit protein uL5 (183 aa).

The protein belongs to the universal ribosomal protein uL5 family. As to quaternary structure, part of the 50S ribosomal subunit; part of the 5S rRNA/L5/L18/L25 subcomplex. Contacts the 5S rRNA and the P site tRNA. Forms a bridge to the 30S subunit in the 70S ribosome.

In terms of biological role, this is one of the proteins that bind and probably mediate the attachment of the 5S RNA into the large ribosomal subunit, where it forms part of the central protuberance. In the 70S ribosome it contacts protein S13 of the 30S subunit (bridge B1b), connecting the 2 subunits; this bridge is implicated in subunit movement. Contacts the P site tRNA; the 5S rRNA and some of its associated proteins might help stabilize positioning of ribosome-bound tRNAs. The protein is Large ribosomal subunit protein uL5 of Pseudothermotoga lettingae (strain ATCC BAA-301 / DSM 14385 / NBRC 107922 / TMO) (Thermotoga lettingae).